The sequence spans 602 residues: Zinc finger MYND domain-containing protein 11 (602 aa).

Residues Lys-6–Gln-82 enclose the SAMD1-like winged helix (WH) domain. The PHD-type zinc finger occupies Asp-100–Ile-148. Positions Lys-149 to Leu-255 constitute a Bromo domain. Zn(2+)-binding residues include Cys-258, Cys-261, Cys-277, and His-281. One can recognise a PWWP domain in the interval Asn-280–Asn-331. A Glycyl lysine isopeptide (Lys-Gly) (interchain with G-Cter in SUMO2) cross-link involves residue Lys-366. Residues Lys-366–Asn-459 are disordered. The short motif at Arg-394 to Arg-400 is the Nuclear localization signal element. Residues Lys-407 and Lys-408 each participate in a glycyl lysine isopeptide (Lys-Gly) (interchain with G-Cter in SUMO2) cross-link. The residue at position 421 (Ser-421) is a Phosphoserine. Residues Ser-435–Asn-459 are compositionally biased toward polar residues. The segment at His-452–Tyr-572 is interaction with human adenovirus E1A. Positions 563, 566, 574, 575, 581, 585, 594, and 598 each coordinate Zn(2+). The MYND-type zinc-finger motif lies at Cys-563 to Cys-598.

As to quaternary structure, homooligomer; forms homooligomers via its C-terminus. Interacts with histone H3.3 trimethylated at 'Lys-36' (H3.3K36me3). Interacts (via MYND-type zinc finger) with NCOR1. Interacts (via MYND-type zinc finger) with MGA protein (via PXLXP motif). Interacts (via MYND-type zinc finger) with EZH2. Interacts with EMSY and E2F6. Interacts with PIAS1 and UBE2I. In terms of assembly, (Microbial infection) Interacts (via MYND-type zinc finger) with human adenovirus early E1A protein (via PXLXP motif); this interaction inhibits E1A mediated transactivation. (Microbial infection) Interacts (via MYND-type zinc finger) with Epstein-Barr virus EBNA2 protein (via PXLXP motif). Interacts with Epstein-Barr virus-derived protein LMP1; leading to negatively regulate NF-kappa-B activation by Epstein-Barr virus-derived protein LMP1. Post-translationally, sumoylated following its interaction with PIAS1 and UBE2I. In terms of processing, ubiquitinated, leading to proteasomal degradation. As to expression, ubiquitous.

Its subcellular location is the nucleus. The protein localises to the chromosome. Chromatin reader that specifically recognizes and binds histone H3.3 trimethylated at 'Lys-36' (H3.3K36me3) and regulates RNA polymerase II elongation. Does not bind other histone H3 subtypes (H3.1 or H3.2). Colocalizes with highly expressed genes and functions as a transcription corepressor by modulating RNA polymerase II at the elongation stage. Binds non-specifically to dsDNA. Acts as a tumor-suppressor by repressing a transcriptional program essential for tumor cell growth. Its function is as follows. (Microbial infection) Inhibits Epstein-Barr virus EBNA2-mediated transcriptional activation and host cell proliferation, through direct interaction. In Homo sapiens (Human), this protein is Zinc finger MYND domain-containing protein 11.